Consider the following 597-residue polypeptide: Probable translation initiation factor IF-2 (597 aa).

The region spanning 4-221 is the tr-type G domain; that stretch reads IRQPIIAVLG…LISGLAQKYL (218 aa). Residues 13–20 are G1; sequence GHVDHGKT. GTP is bound at residue 13 to 20; the sequence is GHVDHGKT. A G2 region spans residues 38-42; the sequence is GITQH. The interval 77-80 is G3; the sequence is DTPG. GTP is bound by residues 77–81 and 131–134; these read DTPGH and NKID. Residues 131–134 are G4; that stretch reads NKID. The interval 199 to 201 is G5; sequence SAK.

The protein belongs to the TRAFAC class translation factor GTPase superfamily. Classic translation factor GTPase family. IF-2 subfamily.

Its function is as follows. Function in general translation initiation by promoting the binding of the formylmethionine-tRNA to ribosomes. Seems to function along with eIF-2. This is Probable translation initiation factor IF-2 from Thermococcus sibiricus (strain DSM 12597 / MM 739).